We begin with the raw amino-acid sequence, 121 residues long: Large ribosomal subunit protein uL18 (121 aa).

It belongs to the universal ribosomal protein uL18 family. In terms of assembly, part of the 50S ribosomal subunit; part of the 5S rRNA/L5/L18/L25 subcomplex. Contacts the 5S and 23S rRNAs.

This is one of the proteins that bind and probably mediate the attachment of the 5S RNA into the large ribosomal subunit, where it forms part of the central protuberance. This chain is Large ribosomal subunit protein uL18, found in Anaplasma phagocytophilum (strain HZ).